We begin with the raw amino-acid sequence, 669 residues long: MPIQVLPPQLANQIAAGEVVERPASVVKELVENSLDAGATRIDIDIERGGAKLIRIRDNGSGIGKDELTLALARHATSKIATLDDLEAIVSMGFRGEALASISSVSRLTLTSRTAEQSEAWQAYAEGRDMAVTVKPAAHPVGTTLEVLDLFYNTPARRKFMRTEKTEFTHIDEVVRRIALARFDVAITLHHNGKLIRQYRAAPDKSQYERRLGNICGATFLQHALAVSWQHGDLTIHGWVADPVGAKQLPDMQYCYVNQRMMRDRLINHAIRQAYQDQLSDDQQPAYVLYLEIDPHQVDVNVHPAKHEVRFHQARLVHDFIYQAVMSVLQQASAPGLGMTSPETGKPVQWQQENRPAAGENHFAQPPRTDNSPSYGGKTPRAGHSGQAKESAYSGYQPENPYQKKQGDLYKALLQPADGAAGASNPSGEHISVPANRVMPPEVVVLSTVSHDSPPNRTAPDATTSSSKPRAPIESPLESQSNGFGRVLTVYPPCYALLEYHKGLAMLSLSVAERHLKAVQLTPSEEGLRAQPLLIPQRLTLSKSELSVLSAHHALLARFGIDVLVESQRATLRAVPLPLRQQNLQNLISELIGYLANYQTVETQQVEPGELASWMATRLQSEQESWSHSQAIQLLADVERLCPQLAKAPPSELLYMMDIHDAIKALKHE.

Disordered regions lie at residues 354–402 (NRPA…ENPY) and 448–479 (TVSHDSPPNRTAPDATTSSSKPRAPIESPLES). The span at 448-468 (TVSHDSPPNRTAPDATTSSSK) shows a compositional bias: polar residues.

It belongs to the DNA mismatch repair MutL/HexB family.

Its function is as follows. This protein is involved in the repair of mismatches in DNA. It is required for dam-dependent methyl-directed DNA mismatch repair. May act as a 'molecular matchmaker', a protein that promotes the formation of a stable complex between two or more DNA-binding proteins in an ATP-dependent manner without itself being part of a final effector complex. The protein is DNA mismatch repair protein MutL of Pectobacterium carotovorum subsp. carotovorum (strain PC1).